A 948-amino-acid polypeptide reads, in one-letter code: Sensor histidine kinase RcsC (948 aa).

The Cytoplasmic segment spans residues Met1–Ala20. Residues Leu21–Leu41 form a helical membrane-spanning segment. The Periplasmic segment spans residues His42–Arg313. The helical transmembrane segment at Ile314–Ala334 threads the bilayer. Residues Arg335–Ala948 are Cytoplasmic-facing. One can recognise a PAS domain in the interval Gln357–Gln425. A Histidine kinase domain is found at Thr476–Gly692. Residue His479 is modified to Phosphohistidine; by autocatalysis. The ABL domain maps to Ala705–Ser805. In terms of domain architecture, Response regulatory spans Met826–Ala940. Asp875 carries the 4-aspartylphosphate modification.

The protein belongs to the RcsC family. As to quaternary structure, interacts with RcsD. Autophosphorylated. Activation probably requires a transfer of a phosphate group from a His in the transmitter domain to an Asp in the receiver domain.

The protein localises to the cell inner membrane. It carries out the reaction ATP + protein L-histidine = ADP + protein N-phospho-L-histidine.. In terms of biological role, component of the Rcs signaling system, which controls transcription of numerous genes. RcsC functions as a membrane-associated protein kinase that phosphorylates RcsD in response to environmental signals. The phosphoryl group is then transferred to the response regulator RcsB. The chain is Sensor histidine kinase RcsC from Salmonella typhi.